The sequence spans 338 residues: Glycerol-3-phosphate dehydrogenase [NAD(P)+] (338 aa).

Residues serine 14, tyrosine 15, histidine 35, and lysine 109 each contribute to the NADPH site. Lysine 109, glycine 138, and threonine 140 together coordinate sn-glycerol 3-phosphate. Residue alanine 142 participates in NADPH binding. 5 residues coordinate sn-glycerol 3-phosphate: lysine 194, aspartate 247, serine 257, arginine 258, and asparagine 259. Residue lysine 194 is the Proton acceptor of the active site. Residue arginine 258 participates in NADPH binding. Residues valine 282 and glutamate 284 each contribute to the NADPH site.

This sequence belongs to the NAD-dependent glycerol-3-phosphate dehydrogenase family.

It localises to the cytoplasm. It carries out the reaction sn-glycerol 3-phosphate + NAD(+) = dihydroxyacetone phosphate + NADH + H(+). The enzyme catalyses sn-glycerol 3-phosphate + NADP(+) = dihydroxyacetone phosphate + NADPH + H(+). The protein operates within membrane lipid metabolism; glycerophospholipid metabolism. Functionally, catalyzes the reduction of the glycolytic intermediate dihydroxyacetone phosphate (DHAP) to sn-glycerol 3-phosphate (G3P), the key precursor for phospholipid synthesis. This chain is Glycerol-3-phosphate dehydrogenase [NAD(P)+], found in Shewanella baltica (strain OS185).